Reading from the N-terminus, the 435-residue chain is FAD-dependent monooxygenase ATEG_07662 (435 aa).

Residues 8–28 (PLDVAIIGGGIIGIMTALGLL) traverse the membrane as a helical segment. FAD-binding residues include Glu38, Ala51, and Arg119. A glycan (N-linked (GlcNAc...) asparagine) is linked at Asn191. Arg201 is an active-site residue. Positions 317 and 330 each coordinate FAD.

It belongs to the paxM FAD-dependent monooxygenase family. FAD serves as cofactor.

The protein localises to the membrane. The protein operates within secondary metabolite biosynthesis. In terms of biological role, FAD-dependent monooxygenase; part of the cluster B that mediates the biosynthesis of azasperpyranones, members of the azaphilone family that exhibit anti-cancer activities. Azasperpyranones are synthesized by 2 clusters, A and B. Cluster A is responsible for the production of the polyhydric phenol moiety while the azaphilonoid scaffold is produced by the cluster B. The non-reducing polyketide synthase ATEG_03629 produces 5-methyl orsellinic acid, which is then reduced to 5-methyl orsellinic aldehyde by the NRPS-like protein ATEG_03630. 5-methyl orsellinic aldehyde is then first hydroxylated by the FAD-dependent monooxygenase ATEG_03635 and subsequently hydroxylated by the cytochrome P450 monooxygenase ATEG_03631 to produce the unstable polyhydric phenol precursor of azasperpyranones. On the other hand, the polyketide synthase ATEG_07659 is responsible for producing the 3,5-dimethyloctadienone moiety from acetyl-CoA, three malonyl-CoA, and two S-adenosyl methionines (SAM). The 3,5-dimethyloctadienone moiety is then loaded onto the SAT domain of ATEG_07661 and extended with four malonyl-CoA and one SAM, which leads to the formation of 2,4-dihydroxy-6-(5,7-dimethyl-2-oxo-trans-3-trans-5-nonadienyl)-3-methylbenzaldehyde (compound 8) after reductive release and aldol condensation. The FAD-dependent monooxygenase ATEG_07662 is the next enzyme in the biosynthesis sequence and hydroxylates the side chain at the benzylic position of compound 8. In Aspergillus nidulans, afoF, the ortholog of the FAD-dependent oxygenase ATEG_07660, is the key enzyme for the biosynthesis of asperfuranone by catalyzing the hydroxylation at C-8 of to prevent the formation of a six-membered ring hemiacetal intermediate and thus facilitating the formation of a five-membered ring to produce asperfuranone. In Aspergillus terreus, ATEG_07660 is probably not functional, which leads to the formation of the six-membered ring hemiacetal intermediate presperpyranone instead of asperfuranone. Finally, ATEG_03636 is involved in the condensation of the polyhydric phenol moiety produced by cluster A and the perasperpyranone precursor produced by cluster B, to yield azasperpyranone A. Further modifications of azasperpyranone A result in the production of derivatives, including azasperpyranone B to F. The polypeptide is FAD-dependent monooxygenase ATEG_07662 (Aspergillus terreus (strain NIH 2624 / FGSC A1156)).